Consider the following 178-residue polypeptide: Large ribosomal subunit protein uL5 (178 aa).

This sequence belongs to the universal ribosomal protein uL5 family. In terms of assembly, part of the 50S ribosomal subunit; part of the 5S rRNA/L5/L18/L25 subcomplex. Contacts the 5S rRNA and the P site tRNA. Forms a bridge to the 30S subunit in the 70S ribosome.

This is one of the proteins that bind and probably mediate the attachment of the 5S RNA into the large ribosomal subunit, where it forms part of the central protuberance. In the 70S ribosome it contacts protein S13 of the 30S subunit (bridge B1b), connecting the 2 subunits; this bridge is implicated in subunit movement. Contacts the P site tRNA; the 5S rRNA and some of its associated proteins might help stabilize positioning of ribosome-bound tRNAs. This Prochlorococcus marinus subsp. pastoris (strain CCMP1986 / NIES-2087 / MED4) protein is Large ribosomal subunit protein uL5.